The sequence spans 233 residues: Attacin-B (233 aa).

Positions Met-1–Ser-17 are cleaved as a signal peptide. A propeptide spanning residues Arg-18–Arg-46 is cleaved from the precursor.

This sequence belongs to the attacin/sarcotoxin-2 family.

Its subcellular location is the secreted. In terms of biological role, hemolymph antibacterial protein. The polypeptide is Attacin-B (Hyalophora cecropia (Cecropia moth)).